Reading from the N-terminus, the 242-residue chain is Biosynthetic peptidoglycan transglycosylase (242 aa).

The helical transmembrane segment at 21 to 41 threads the bilayer; sequence VALVVFWGGGIALFSVVPVPF.

This sequence belongs to the glycosyltransferase 51 family.

The protein localises to the cell inner membrane. It carries out the reaction [GlcNAc-(1-&gt;4)-Mur2Ac(oyl-L-Ala-gamma-D-Glu-L-Lys-D-Ala-D-Ala)](n)-di-trans,octa-cis-undecaprenyl diphosphate + beta-D-GlcNAc-(1-&gt;4)-Mur2Ac(oyl-L-Ala-gamma-D-Glu-L-Lys-D-Ala-D-Ala)-di-trans,octa-cis-undecaprenyl diphosphate = [GlcNAc-(1-&gt;4)-Mur2Ac(oyl-L-Ala-gamma-D-Glu-L-Lys-D-Ala-D-Ala)](n+1)-di-trans,octa-cis-undecaprenyl diphosphate + di-trans,octa-cis-undecaprenyl diphosphate + H(+). The protein operates within cell wall biogenesis; peptidoglycan biosynthesis. Functionally, peptidoglycan polymerase that catalyzes glycan chain elongation from lipid-linked precursors. This Salmonella arizonae (strain ATCC BAA-731 / CDC346-86 / RSK2980) protein is Biosynthetic peptidoglycan transglycosylase.